Reading from the N-terminus, the 196-residue chain is ATP-dependent Clp protease proteolytic subunit (196 aa).

The active-site Nucleophile is serine 98. Residue histidine 123 is part of the active site.

It belongs to the peptidase S14 family. Fourteen ClpP subunits assemble into 2 heptameric rings which stack back to back to give a disk-like structure with a central cavity, resembling the structure of eukaryotic proteasomes.

The protein localises to the cytoplasm. It carries out the reaction Hydrolysis of proteins to small peptides in the presence of ATP and magnesium. alpha-casein is the usual test substrate. In the absence of ATP, only oligopeptides shorter than five residues are hydrolyzed (such as succinyl-Leu-Tyr-|-NHMec, and Leu-Tyr-Leu-|-Tyr-Trp, in which cleavage of the -Tyr-|-Leu- and -Tyr-|-Trp bonds also occurs).. In terms of biological role, cleaves peptides in various proteins in a process that requires ATP hydrolysis. Has a chymotrypsin-like activity. Plays a major role in the degradation of misfolded proteins. This Anoxybacillus flavithermus (strain DSM 21510 / WK1) protein is ATP-dependent Clp protease proteolytic subunit.